The sequence spans 279 residues: Cholesterol 25-hydroxylase-like protein 2 (279 aa).

N-linked (GlcNAc...) asparagine glycosylation is found at N6 and N13. The next 3 membrane-spanning stretches occupy residues 36–56, 86–106, and 120–140; these read LFPVILSVSMYLVLVFFYTVL, LALTTYNHLLYIFPAAVAQWL, and LTAFLLGIVGCTVVFDFQYYL. One can recognise a Fatty acid hydroxylase domain in the interval 128–262; the sequence is VGCTVVFDFQ…FAHWDWLGGT (135 aa). The Histidine box-1 signature appears at 141–145; the sequence is WHLLH. The Histidine box-2 signature appears at 156–160; it reads HALHH. 2 consecutive transmembrane segments span residues 165–185 and 189–209; these read TFSLVTQYLSAWELFSVGFWT and PLLLQCHCLTAWAFMLFNIWV. The Histidine box-3 motif lies at 237 to 243; the sequence is RHDAHHQ.

This sequence belongs to the sterol desaturase family. It depends on Fe cation as a cofactor.

The protein localises to the endoplasmic reticulum membrane. In terms of biological role, may catalyze the formation of 25-hydroxycholesterol from cholesterol. The sequence is that of Cholesterol 25-hydroxylase-like protein 2 from Danio rerio (Zebrafish).